The primary structure comprises 84 residues: MGQAVSYLTYTLRRCCKKNTLTTESGEVIELDDEHYDTVDLDDLRCSDPLMQPKFVLLKNGRRGKRNREYDNDHEKYVMMFNKE.

Residue Gly-2 is the site of N-myristoyl glycine; by host attachment. Residues 40-46 are asp/Glu-rich (acidic); it reads DLDDLRC.

Belongs to the herpesviridae cytoplasmic envelopment protein 3 family. In terms of assembly, interacts with cytoplasmic envelopment protein 2; this interaction is essential for the proper localization of each protein to the assembly complex and thus for the production of infectious virus. Myristoylation and palmitoylation (probably on one or more of the nearby cysteines at the N-terminus) enable membrane-binding and Golgi apparatus-specific targeting and are essential for efficient packaging. In terms of processing, phosphorylated. Phosphorylation does not seem to be required for recycling to the host Golgi apparatus. Packaging is selective for underphosphorylated forms.

Its subcellular location is the virion tegument. The protein localises to the virion membrane. It localises to the host cell membrane. It is found in the host Golgi apparatus membrane. Functionally, plays an important role in the cytoplasmic envelopment of tegument proteins and capsids during the assembly and egress processes. Also participates in viral entry at the fusion step probably by regulating the core fusion machinery. The sequence is that of Cytoplasmic envelopment protein 3 (MDV023) from Gallus gallus (Chicken).